The following is a 278-amino-acid chain: S-formylglutathione hydrolase YeiG (278 aa).

Catalysis depends on charge relay system residues S145, D223, and H256.

It belongs to the esterase D family.

It catalyses the reaction S-formylglutathione + H2O = formate + glutathione + H(+). Its function is as follows. Serine hydrolase involved in the detoxification of formaldehyde. Hydrolyzes S-formylglutathione to glutathione and formate. The protein is S-formylglutathione hydrolase YeiG (yeiG) of Escherichia coli O6:K15:H31 (strain 536 / UPEC).